A 215-amino-acid polypeptide reads, in one-letter code: Octanoyltransferase (215 aa).

The BPL/LPL catalytic domain maps to 31–206 (TSAEDEIWLV…QLVKHLDYAE (176 aa)). Substrate-binding positions include 70–77 (RGGQVTYH), 137–139 (SLG), and 150–152 (GLA). Catalysis depends on C168, which acts as the Acyl-thioester intermediate.

Belongs to the LipB family.

It localises to the cytoplasm. The enzyme catalyses octanoyl-[ACP] + L-lysyl-[protein] = N(6)-octanoyl-L-lysyl-[protein] + holo-[ACP] + H(+). It participates in protein modification; protein lipoylation via endogenous pathway; protein N(6)-(lipoyl)lysine from octanoyl-[acyl-carrier-protein]: step 1/2. In terms of biological role, catalyzes the transfer of endogenously produced octanoic acid from octanoyl-acyl-carrier-protein onto the lipoyl domains of lipoate-dependent enzymes. Lipoyl-ACP can also act as a substrate although octanoyl-ACP is likely to be the physiological substrate. The chain is Octanoyltransferase from Pseudomonas fluorescens (strain SBW25).